A 74-amino-acid chain; its full sequence is Delta-stichotoxin-Sgt2a (74 aa).

The first 19 residues, 1–19 (MNRLIILVFAAVFLTLASA), serve as a signal peptide directing secretion. A propeptide spanning residues 20–28 (EVSEDVNMA) is cleaved from the precursor. 3 disulfide bridges follow: Cys-34–Cys-71, Cys-36–Cys-64, and Cys-57–Cys-72.

This sequence belongs to the sea anemone sodium channel inhibitory toxin family. Type I subfamily.

The protein resides in the secreted. It is found in the nematocyst. In terms of biological role, binds specifically to voltage-gated sodium channels (Nav), thereby delaying their inactivation during signal transduction. The sequence is that of Delta-stichotoxin-Sgt2a from Stichodactyla gigantea (Giant carpet anemone).